An 81-amino-acid polypeptide reads, in one-letter code: Cell division protein ZapB (81 aa).

Residues 5–81 (LEVFEKLEAK…QALLGRMEEV (77 aa)) adopt a coiled-coil conformation. Residue Lys-10 is modified to N6-acetyllysine. The tract at residues 36-67 (NNSLSQEVQNAQHQREELERENNHLKEQQNGW) is disordered. A compositionally biased stretch (polar residues) spans 37–47 (NSLSQEVQNAQ). The span at 48–62 (HQREELERENNHLKE) shows a compositional bias: basic and acidic residues.

The protein belongs to the ZapB family. Homodimer. The ends of the coiled-coil dimer bind to each other, forming polymers. Interacts with FtsZ.

The protein localises to the cytoplasm. Functionally, non-essential, abundant cell division factor that is required for proper Z-ring formation. It is recruited early to the divisome by direct interaction with FtsZ, stimulating Z-ring assembly and thereby promoting cell division earlier in the cell cycle. Its recruitment to the Z-ring requires functional FtsA or ZipA. In Shigella boydii serotype 4 (strain Sb227), this protein is Cell division protein ZapB.